A 392-amino-acid chain; its full sequence is Putative RNA-binding protein Luc7-like 2 (392 aa).

The residue at position 18 (S18) is a Phosphoserine. Positions 102-177 (EVSKKRLAET…EAEEVYRNSM (76 aa)) form a coiled coil. Positions 235 to 257 (KQEKRNQERLKRREEREREEREK) are enriched in basic and acidic residues. The tract at residues 235–392 (KQEKRNQERL…SSEEREAGEI (158 aa)) is disordered. Basic residues predominate over residues 258-321 (LRRSRSHSKN…RSRSHQRSRH (64 aa)). Residues K266 and K269 each carry the 5-hydroxylysine; by JMJD6 modification. Basic and acidic residues-rich tracts occupy residues 337-364 (KERF…DRDR) and 377-392 (RSED…AGEI).

This sequence belongs to the Luc7 family. Interacts with SCNM1. As to expression, all isoforms are expressed in brain, kidney, heart, thymus, stomach, skeletal muscle, testis and spinal cord.

It localises to the nucleus speckle. Its subcellular location is the nucleus. The protein resides in the nucleoplasm. Its function is as follows. May bind to RNA via its Arg/Ser-rich domain. The sequence is that of Putative RNA-binding protein Luc7-like 2 (Luc7l2) from Mus musculus (Mouse).